The primary structure comprises 823 residues: Apoptosis-resistant E3 ubiquitin protein ligase 1 (823 aa).

Residues 52–158 (GNYLDPRSCK…VAYSPYYKIF (107 aa)) form a Filamin repeat. The tract at residues 315 to 345 (PPMHMTSSQRRPSTAVDEEDEDSPSECHTPE) is disordered. The segment at 483–789 (SISDWSKNFE…THSTLPTAHT (307 aa)) is interaction with SOCS2. The HECT domain occupies 483-823 (SISDWSKNFE…SEGCEGFGML (341 aa)). Residue Cys-790 is the Glycyl thioester intermediate of the active site.

In terms of assembly, interacts with SOCS2. Interacts (via HECT domain) with HTRA2, DIABLO/SMAC and SEPTIN4; in the cytoplasm following induction of apoptosis. In terms of processing, autoubiquitinated in vitro in the presence of E2 enzyme UBE2D1/UBCH5A.

The enzyme catalyses S-ubiquitinyl-[E2 ubiquitin-conjugating enzyme]-L-cysteine + [acceptor protein]-L-lysine = [E2 ubiquitin-conjugating enzyme]-L-cysteine + N(6)-ubiquitinyl-[acceptor protein]-L-lysine.. The protein operates within protein modification; protein ubiquitination. Functionally, E3 ubiquitin-protein ligase that catalyzes 'Lys-11'- or 'Lys-33'-linked polyubiquitin chains, with some preference for 'Lys-33' linkages. E3 ubiquitin-protein ligases accept ubiquitin from an E2 ubiquitin-conjugating enzyme in the form of a thioester and then directly transfers the ubiquitin to targeted substrates. Ubiquitinates SEPTIN4, DIABLO/SMAC and HTRA2 in vitro. Modulates pulmonary inflammation by targeting SOCS2 for ubiquitination and subsequent degradation by the proteasome. This chain is Apoptosis-resistant E3 ubiquitin protein ligase 1, found in Homo sapiens (Human).